A 223-amino-acid polypeptide reads, in one-letter code: Deoxyribose-phosphate aldolase (223 aa).

Residue Asp-91 is the Proton donor/acceptor of the active site. The Schiff-base intermediate with acetaldehyde role is filled by Lys-153. The active-site Proton donor/acceptor is the Lys-182.

It belongs to the DeoC/FbaB aldolase family. DeoC type 1 subfamily.

It is found in the cytoplasm. The enzyme catalyses 2-deoxy-D-ribose 5-phosphate = D-glyceraldehyde 3-phosphate + acetaldehyde. Its pathway is carbohydrate degradation; 2-deoxy-D-ribose 1-phosphate degradation; D-glyceraldehyde 3-phosphate and acetaldehyde from 2-deoxy-alpha-D-ribose 1-phosphate: step 2/2. Its function is as follows. Catalyzes a reversible aldol reaction between acetaldehyde and D-glyceraldehyde 3-phosphate to generate 2-deoxy-D-ribose 5-phosphate. The protein is Deoxyribose-phosphate aldolase of Streptococcus pyogenes serotype M12 (strain MGAS2096).